A 540-amino-acid polypeptide reads, in one-letter code: Pentatricopeptide repeat-containing protein At1g14470 (540 aa).

14 PPR repeats span residues Asn70–Pro104, Asp105–Lys134, Asp135–Arg165, Lys166–Asn196, Asp197–Lys227, Ser228–Pro262, Asn263–Leu297, Asn298–Gln328, Asn330–Ser364, Trp365–Lys395, Asp397–Leu431, Asn432–Arg462, Asp463–Pro497, and Asp498–Pro528.

The protein belongs to the PPR family. PCMP-A subfamily.

The polypeptide is Pentatricopeptide repeat-containing protein At1g14470 (PCMP-A4) (Arabidopsis thaliana (Mouse-ear cress)).